A 419-amino-acid chain; its full sequence is Mitochondrial chaperone BCS1 (419 aa).

The Mitochondrial intermembrane segment spans residues 2–15 (PLSDFILALKDNPY). A helical membrane pass occupies residues 16 to 32 (FGAGFGLVGVGTALALA). Over 33–419 (RKGVQLGLVA…AIHNAESLRR (387 aa)) the chain is Mitochondrial matrix. Tyrosine 181 is modified (phosphotyrosine). 230-237 (GPPGCGKS) is a binding site for ATP.

The protein belongs to the AAA ATPase family. BCS1 subfamily. Interacts with LETM1. Ubiquitous.

The protein resides in the mitochondrion inner membrane. The catalysed reaction is ATP + H2O = ADP + phosphate + H(+). Functionally, chaperone necessary for the incorporation of Rieske iron-sulfur protein UQCRFS1 into the mitochondrial respiratory chain complex III. Plays an important role in the maintenance of mitochondrial tubular networks, respiratory chain assembly and formation of the LETM1 complex. The sequence is that of Mitochondrial chaperone BCS1 (BCS1L) from Homo sapiens (Human).